The sequence spans 487 residues: MNASEFRRRGKEMVDYVADYLEGIEGRQVFPDVDPGYLRPLIPTTAPQEPETFEAIIEDIEKIIMPGVTHWHSPYFFAYFPTASSYPAMLADMLCGAIGCIGFSWAASPACTELETVMMDWLGKMLQLPEAFLAGEAGEGGGVIQGTASEATLVALLAARTKVTRHLQAASPELMQAAIMEKLVAYASDQAHSSVEKAGLIGGVRLKAIPSDGKFAMRASALQEALERDKAAGLIPFFVVATLGTTSCCSFDNLLEVGPICHEEGLWLHVDAAYAGSAFICPEFRHLLNGVEFADSFNFNPHKWLLVNFDCSAMWVKKRTDLTGAFRLDPVYLRHSHQDSGLITDYRHWQLPLGRRFRSLKMWFVFRMYGVKGLQAYIRKHVQLSHAFEALVRQDTRFEICAEVILGLVCFRLKGSNKLNEALLESINSAKKIHLVPCSLRDRFVLRFAICSRTVELAHVQLAWEHIQEMAATVLRAQGEEKAEIKN.

Met1 carries the post-translational modification N-acetylmethionine. Repeat copies occupy residues 58 to 115 (EDIE…TELE) and 118 to 178 (MMDW…MQAA). A 2 X approximate tandem repeats region spans residues 58–178 (EDIEKIIMPG…AASPELMQAA (121 aa)). Thr82 contacts substrate. The pyridoxal 5'-phosphate site is built by Ala148 and Ser149. His192 contacts substrate. Residues Thr246 and Asn300 each contribute to the pyridoxal 5'-phosphate site. Residue Lys303 is modified to N6-(pyridoxal phosphate)lysine.

This sequence belongs to the group II decarboxylase family. In terms of assembly, homodimer. Pyridoxal 5'-phosphate is required as a cofactor.

It carries out the reaction L-dopa + H(+) = dopamine + CO2. The catalysed reaction is 5-hydroxy-L-tryptophan + H(+) = serotonin + CO2. Its pathway is catecholamine biosynthesis; dopamine biosynthesis; dopamine from L-tyrosine: step 2/2. Catalyzes the decarboxylation of L-3,4-dihydroxyphenylalanine (DOPA) to dopamine and L-5-hydroxytryptophan to serotonin. The polypeptide is Aromatic-L-amino-acid decarboxylase (DDC) (Bos taurus (Bovine)).